The chain runs to 532 residues: CTP synthase (532 aa).

The amidoligase domain stretch occupies residues 1–268 (MTTKYIFVTG…DEIVCDHLNL (268 aa)). Residue Ser14 participates in CTP binding. Ser14 is a UTP binding site. 15-20 (SLGKGI) contributes to the ATP binding site. Residue Tyr55 coordinates L-glutamine. Asp72 contacts ATP. The Mg(2+) site is built by Asp72 and Glu142. CTP-binding positions include 149 to 151 (DIE), 189 to 194 (KSKPTQ), and Lys225. Residues 189–194 (KSKPTQ) and Lys225 each bind UTP. 241–243 (RDA) serves as a coordination point for ATP. The Glutamine amidotransferase type-1 domain maps to 293–532 (KIALVGKYVA…REFIQASLRK (240 aa)). Gly355 contacts L-glutamine. The active-site Nucleophile; for glutamine hydrolysis is the Cys382. Residues 383–386 (LGMQ), Glu406, and Arg463 contribute to the L-glutamine site. Active-site residues include His508 and Glu510.

This sequence belongs to the CTP synthase family. As to quaternary structure, homotetramer.

It catalyses the reaction UTP + L-glutamine + ATP + H2O = CTP + L-glutamate + ADP + phosphate + 2 H(+). It carries out the reaction L-glutamine + H2O = L-glutamate + NH4(+). The enzyme catalyses UTP + NH4(+) + ATP = CTP + ADP + phosphate + 2 H(+). The protein operates within pyrimidine metabolism; CTP biosynthesis via de novo pathway; CTP from UDP: step 2/2. Its activity is regulated as follows. Allosterically activated by GTP, when glutamine is the substrate; GTP has no effect on the reaction when ammonia is the substrate. The allosteric effector GTP functions by stabilizing the protein conformation that binds the tetrahedral intermediate(s) formed during glutamine hydrolysis. Inhibited by the product CTP, via allosteric rather than competitive inhibition. In terms of biological role, catalyzes the ATP-dependent amination of UTP to CTP with either L-glutamine or ammonia as the source of nitrogen. Regulates intracellular CTP levels through interactions with the four ribonucleotide triphosphates. The chain is CTP synthase from Halalkalibacterium halodurans (strain ATCC BAA-125 / DSM 18197 / FERM 7344 / JCM 9153 / C-125) (Bacillus halodurans).